A 189-amino-acid chain; its full sequence is Elongation factor P (189 aa).

The residue at position 34 (K34) is an N6-(3,6-diaminohexanoyl)-5-hydroxylysine.

Belongs to the elongation factor P family. May be beta-lysylated on the epsilon-amino group of Lys-34 by the combined action of EpmA and EpmB, and then hydroxylated on the C5 position of the same residue by EpmC (if this protein is present). Lysylation is critical for the stimulatory effect of EF-P on peptide-bond formation. The lysylation moiety may extend toward the peptidyltransferase center and stabilize the terminal 3-CCA end of the tRNA. Hydroxylation of the C5 position on Lys-34 may allow additional potential stabilizing hydrogen-bond interactions with the P-tRNA.

It localises to the cytoplasm. It functions in the pathway protein biosynthesis; polypeptide chain elongation. Functionally, involved in peptide bond synthesis. Alleviates ribosome stalling that occurs when 3 or more consecutive Pro residues or the sequence PPG is present in a protein, possibly by augmenting the peptidyl transferase activity of the ribosome. Modification of Lys-34 is required for alleviation. This is Elongation factor P from Acinetobacter baumannii (strain AB307-0294).